The following is a 95-amino-acid chain: Small ribosomal subunit protein bS6 (95 aa).

It belongs to the bacterial ribosomal protein bS6 family.

Binds together with bS18 to 16S ribosomal RNA. The protein is Small ribosomal subunit protein bS6 of Exiguobacterium sp. (strain ATCC BAA-1283 / AT1b).